We begin with the raw amino-acid sequence, 149 residues long: uncharacterized protein (149 aa).

The chain crosses the membrane as a helical span at residues 12 to 31 (FKNLVIGAVSGVAAAYFLST).

It is found in the membrane. This is an uncharacterized protein from Streptococcus pyogenes serotype M6 (strain ATCC BAA-946 / MGAS10394).